Consider the following 63-residue polypeptide: Large ribosomal subunit protein uL29 (63 aa).

The protein belongs to the universal ribosomal protein uL29 family.

The protein is Large ribosomal subunit protein uL29 of Escherichia coli O8 (strain IAI1).